A 379-amino-acid polypeptide reads, in one-letter code: Mating-type protein MAT-1 (379 aa).

The alpha box DNA-binding region spans R60–R117.

It belongs to the MATALPHA1 family.

It is found in the nucleus. Functionally, mating type proteins are sequence specific DNA-binding proteins that act as master switches in fungal differentiation by controlling gene expression in a cell type-specific fashion. Transcriptional activator that induces the transcription of alpha-specific genes. The protein is Mating-type protein MAT-1 (MAT1) of Curvularia kusanoi (Cochliobolus kusanoi).